The chain runs to 224 residues: Metalloproteinase inhibitor 4 (224 aa).

The first 29 residues, 1-29 (MPWSPLAALSWALVLRLLALLWPPGRGEA), serve as a signal peptide directing secretion. A Zn(2+)-binding site is contributed by Cys-30. 2 involved in metalloproteinase-binding regions span residues 30–33 (CSCA) and 99–100 (SS). Cystine bridges form between Cys-30/Cys-102, Cys-32/Cys-131, Cys-42/Cys-156, Cys-158/Cys-205, Cys-163/Cys-168, and Cys-176/Cys-197. In terms of domain architecture, NTR spans 30-156 (CSCAPAHPQQ…SLNHHYHQNC (127 aa)).

This sequence belongs to the protease inhibitor I35 (TIMP) family. Expressed in retina, smooth muscle, skin, pancreas, skeletal muscle, heart, brain, lung, kidney and testis. Not found in cartilage, spleen and liver.

The protein resides in the secreted. In terms of biological role, complexes with metalloproteinases (such as collagenases) and irreversibly inactivates them by binding to their catalytic zinc cofactor. The chain is Metalloproteinase inhibitor 4 (Timp4) from Rattus norvegicus (Rat).